The sequence spans 641 residues: Chaperone protein DnaK (641 aa).

Phosphothreonine; by autocatalysis is present on T198. Basic and acidic residues-rich tracts occupy residues A514–E529, S540–E554, and A608–D621. Disordered regions lie at residues A514–E554 and Q604–A641. The span at D622–D633 shows a compositional bias: acidic residues.

It belongs to the heat shock protein 70 family.

Acts as a chaperone. This is Chaperone protein DnaK from Sinorhizobium medicae (strain WSM419) (Ensifer medicae).